A 303-amino-acid polypeptide reads, in one-letter code: Oxygen-dependent coproporphyrinogen-III oxidase (303 aa).

Residue S93 participates in substrate binding. A divalent metal cation contacts are provided by H97 and H107. Catalysis depends on H107, which acts as the Proton donor. 109 to 111 (NVR) is a binding site for substrate. A divalent metal cation is bound by residues H146 and H176. Residues 241–276 (YVEFNLVYDRGTLFGLQSGGRTESILMSLPPQVRWG) form an important for dimerization region. A substrate-binding site is contributed by 259–261 (GGR).

It belongs to the aerobic coproporphyrinogen-III oxidase family. As to quaternary structure, homodimer. A divalent metal cation serves as cofactor.

The protein resides in the cytoplasm. It catalyses the reaction coproporphyrinogen III + O2 + 2 H(+) = protoporphyrinogen IX + 2 CO2 + 2 H2O. The protein operates within porphyrin-containing compound metabolism; protoporphyrin-IX biosynthesis; protoporphyrinogen-IX from coproporphyrinogen-III (O2 route): step 1/1. Functionally, involved in the heme biosynthesis. Catalyzes the aerobic oxidative decarboxylation of propionate groups of rings A and B of coproporphyrinogen-III to yield the vinyl groups in protoporphyrinogen-IX. In Pseudomonas putida (strain GB-1), this protein is Oxygen-dependent coproporphyrinogen-III oxidase.